The sequence spans 333 residues: Mitochondrial thiamine pyrophosphate carrier 1 (333 aa).

3 Solcar repeats span residues 12–115, 129–215, and 222–318; these read GSRL…ITQF, PPSV…LRPR, and PYSS…ALKL. 6 helical membrane-spanning segments follow: residues 17–35, 96–112, 135–155, 190–209, 221–238, and 293–310; these read VTAA…IAPL, LLYV…YRSI, FIAG…LDLL, GLGP…FCVY, LPYS…SVMA, and GLTV…VTMW.

Belongs to the mitochondrial carrier (TC 2.A.29) family.

The protein localises to the mitochondrion inner membrane. Functionally, mitochondrial transporter that mediates uptake of thiamine pyrophosphate (ThPP) into mitochondria. In Neurospora crassa (strain ATCC 24698 / 74-OR23-1A / CBS 708.71 / DSM 1257 / FGSC 987), this protein is Mitochondrial thiamine pyrophosphate carrier 1 (tpc-1).